The chain runs to 632 residues: 2-hydroxyacyl-CoA lyase 2 (632 aa).

A helical membrane pass occupies residues 13 to 33 (LFPSFLLLACGTLVAALLGAA). Glu98 contributes to the thiamine diphosphate binding site. The interval 470-550 (DFVGTAAHLV…VMALVGNDAG (81 aa)) is thiamine pyrophosphate binding. Residues Asp521 and Asn547 each coordinate Mg(2+).

Belongs to the TPP enzyme family. Mg(2+) is required as a cofactor. Thiamine diphosphate serves as cofactor. As to expression, expressed in all tissues tested, with highest expression in heart, pancreas and placenta.

Its subcellular location is the endoplasmic reticulum membrane. It carries out the reaction 2-hydroxyoctadecanoyl-CoA = heptadecanal + formyl-CoA. The enzyme catalyses (2R)-hydroxyhexadecanoyl-CoA = pentadecanal + formyl-CoA. Its function is as follows. Endoplasmic reticulum 2-OH acyl-CoA lyase involved in the cleavage (C1 removal) reaction in the fatty acid alpha-oxydation in a thiamine pyrophosphate (TPP)-dependent manner. Involved in the phytosphingosine degradation pathway. This is 2-hydroxyacyl-CoA lyase 2 from Homo sapiens (Human).